A 129-amino-acid polypeptide reads, in one-letter code: Biogenesis of lysosome-related organelles complex 1 subunit CNL1 (129 aa).

It belongs to the BLOC1S4 family. In terms of assembly, component of the biogenesis of lysosome-related organelles complex-1 (BLOC-1).

The protein resides in the cytoplasm. Component of the biogenesis of lysosome-related organelles complex-1 (BLOC-1), a complex that is involved in endosomal cargo sorting. The chain is Biogenesis of lysosome-related organelles complex 1 subunit CNL1 (CLN1) from Eremothecium gossypii (strain ATCC 10895 / CBS 109.51 / FGSC 9923 / NRRL Y-1056) (Yeast).